The chain runs to 290 residues: UPF0761 membrane protein YihY (290 aa).

The next 6 membrane-spanning stretches (helical) occupy residues 44 to 64, 104 to 124, 140 to 160, 183 to 203, 210 to 230, and 244 to 264; these read LLSL…FPMF, VGAC…DSAL, FAVY…SLAI, VLPL…VPTT, AIVG…GFAL, and VLAV…IVLL.

It belongs to the UPF0761 family.

The protein resides in the cell inner membrane. This Salmonella arizonae (strain ATCC BAA-731 / CDC346-86 / RSK2980) protein is UPF0761 membrane protein YihY.